The sequence spans 233 residues: 5'-methylthioadenosine/S-adenosylhomocysteine nucleosidase (233 aa).

E12 (proton acceptor) is an active-site residue. Substrate contacts are provided by residues G78, I152, and 173–174; that span reads ME. D197 (proton donor) is an active-site residue.

This sequence belongs to the PNP/UDP phosphorylase family. MtnN subfamily. In terms of assembly, homodimer.

It carries out the reaction S-adenosyl-L-homocysteine + H2O = S-(5-deoxy-D-ribos-5-yl)-L-homocysteine + adenine. The enzyme catalyses S-methyl-5'-thioadenosine + H2O = 5-(methylsulfanyl)-D-ribose + adenine. It catalyses the reaction 5'-deoxyadenosine + H2O = 5-deoxy-D-ribose + adenine. Its pathway is amino-acid biosynthesis; L-methionine biosynthesis via salvage pathway; S-methyl-5-thio-alpha-D-ribose 1-phosphate from S-methyl-5'-thioadenosine (hydrolase route): step 1/2. Functionally, catalyzes the irreversible cleavage of the glycosidic bond in both 5'-methylthioadenosine (MTA) and S-adenosylhomocysteine (SAH/AdoHcy) to adenine and the corresponding thioribose, 5'-methylthioribose and S-ribosylhomocysteine, respectively. Also cleaves 5'-deoxyadenosine, a toxic by-product of radical S-adenosylmethionine (SAM) enzymes, into 5-deoxyribose and adenine. Thus, is required for in vivo function of the radical SAM enzymes biotin synthase and lipoic acid synthase, that are inhibited by 5'-deoxyadenosine accumulation. This is 5'-methylthioadenosine/S-adenosylhomocysteine nucleosidase from Sodalis glossinidius (strain morsitans).